We begin with the raw amino-acid sequence, 504 residues long: Deoxyguanosinetriphosphate triphosphohydrolase (504 aa).

An HD domain is found at 66–273 (RLTHSLEVQQ…MEAADDISYC (208 aa)).

It belongs to the dGTPase family. Type 1 subfamily. As to quaternary structure, homotetramer. It depends on Mg(2+) as a cofactor.

It carries out the reaction dGTP + H2O = 2'-deoxyguanosine + triphosphate + H(+). Its function is as follows. dGTPase preferentially hydrolyzes dGTP over the other canonical NTPs. The protein is Deoxyguanosinetriphosphate triphosphohydrolase of Klebsiella pneumoniae subsp. pneumoniae (strain ATCC 700721 / MGH 78578).